The chain runs to 476 residues: Lactate utilization protein B (476 aa).

4Fe-4S ferredoxin-type domains lie at 304–334 (GTEFQPVLQCIRCAACVNVCPVYRHIGGHSY) and 353–382 (YDDYKELPYASSLCAACTEVCPVKIPLHEL). The [4Fe-4S] cluster site is built by Cys313, Cys316, Cys319, Cys323, Cys366, Cys369, and Cys373.

Belongs to the LutB/YkgF family.

Its function is as follows. Is involved in L-lactate degradation and allows cells to grow with lactate as the sole carbon source. Has probably a role as an electron transporter during oxidation of L-lactate. The polypeptide is Lactate utilization protein B (Geobacillus thermodenitrificans (strain NG80-2)).